Consider the following 166-residue polypeptide: MSAIIEAKKQQVDVIAEQLKNSVSTVIVDYRGLTVAEVTELRSQLREAGVEYKVYKNTMVRRAAEQAGIEGLDEFLTGPTAVATSTEDVVAPAKVIAGFAKEHEALEIKTGVMEGSVISAEEVKTVGSLPSHDGLVSMLLSVLQAPVRNFAYAVKAVGEQKEESAE.

It belongs to the universal ribosomal protein uL10 family. As to quaternary structure, part of the ribosomal stalk of the 50S ribosomal subunit. The N-terminus interacts with L11 and the large rRNA to form the base of the stalk. The C-terminus forms an elongated spine to which L12 dimers bind in a sequential fashion forming a multimeric L10(L12)X complex.

Functionally, forms part of the ribosomal stalk, playing a central role in the interaction of the ribosome with GTP-bound translation factors. The sequence is that of Large ribosomal subunit protein uL10 from Staphylococcus haemolyticus (strain JCSC1435).